Here is a 1220-residue protein sequence, read N- to C-terminus: Deubiquitinating protein VCPIP1 (1220 aa).

Residues 1–19 are compositionally biased toward pro residues; the sequence is MSQPPPPPPLPPPPPPPEA. The disordered stretch occupies residues 1–40; that stretch reads MSQPPPPPPLPPPPPPPEAPQTSSSLAAAASPGGLSKRRD. Residues 20 to 35 show a composition bias toward low complexity; the sequence is PQTSSSLAAAASPGGL. Residues 207-360 form the OTU domain; sequence LIPVHVDGDG…RNHYIPLVGI (154 aa). The active site involves Asp215. Catalysis depends on Cys218, which acts as the Nucleophile. Residue His353 is part of the active site. N6-acetyllysine is present on Lys407. Disordered regions lie at residues 724-778 and 988-1008; these read SVMQ…KIRI and EATT…LGSG. Residues Ser746 and Ser756 each carry the phosphoserine modification. Residues 754–770 show a composition bias toward low complexity; it reads PSSAPATPTKAPYSPTT. Thr762 is modified (phosphothreonine). Phosphoserine is present on residues Ser767, Ser993, Ser997, and Ser1076. 2 disordered regions span residues 1113–1140 and 1185–1220; these read SSIQ…QRKV and FATR…MDHS. Residues Ser1196 and Ser1205 each carry the phosphoserine modification. A compositionally biased stretch (acidic residues) spans 1197-1207; that stretch reads MEEPEEMDSQD. The segment covering 1208-1220 has biased composition (polar residues); sequence AETTNTTEPMDHS.

Binds VCP and the ternary complex containing STX5A, NSFL1C and VCP. Post-translationally, phosphorylated at Ser-1205 by ATM or ATR following induction of covalent DNA-protein cross-links (DPCs).

It localises to the nucleus. The protein resides in the cytoplasm. Its subcellular location is the endoplasmic reticulum. It is found in the golgi apparatus. The protein localises to the golgi stack. It catalyses the reaction Thiol-dependent hydrolysis of ester, thioester, amide, peptide and isopeptide bonds formed by the C-terminal Gly of ubiquitin (a 76-residue protein attached to proteins as an intracellular targeting signal).. Its function is as follows. Deubiquitinating enzyme involved in DNA repair and reassembly of the Golgi apparatus and the endoplasmic reticulum following mitosis. Necessary for VCP-mediated reassembly of Golgi stacks after mitosis. Plays a role in VCP-mediated formation of transitional endoplasmic reticulum (tER). Mediates dissociation of the ternary complex containing STX5A, NSFL1C and VCP. Also involved in DNA repair following phosphorylation by ATM or ATR: acts by catalyzing deubiquitination of SPRTN, thereby promoting SPRTN recruitment to chromatin and subsequent proteolytic cleavage of covalent DNA-protein cross-links (DPCs). Hydrolyzes 'Lys-11'- and 'Lys-48'-linked polyubiquitin chains. In Mus musculus (Mouse), this protein is Deubiquitinating protein VCPIP1.